A 164-amino-acid polypeptide reads, in one-letter code: Peroxynitrite isomerase (164 aa).

Residues 21-27 carry the GXWXGXG motif; sequence GRWGGRG. Lys130 and His156 together coordinate heme b.

This sequence belongs to the nitrobindin family. In terms of assembly, homodimer. It depends on heme b as a cofactor.

The catalysed reaction is peroxynitrite = nitrate. It participates in nitrogen metabolism. Functionally, heme-binding protein able to scavenge peroxynitrite and to protect free L-tyrosine against peroxynitrite-mediated nitration, by acting as a peroxynitrite isomerase that converts peroxynitrite to nitrate. Therefore, this protein likely plays a role in peroxynitrite sensing and in the detoxification of reactive nitrogen and oxygen species (RNS and ROS, respectively). Is able to bind nitric oxide (NO) in vitro, but may act as a sensor of peroxynitrite levels in vivo. The protein is Peroxynitrite isomerase of Nocardioides sp. (strain ATCC BAA-499 / JS614).